The chain runs to 213 residues: Uridine kinase (213 aa).

An ATP-binding site is contributed by 15-22 (GASASGKS).

Belongs to the uridine kinase family.

It localises to the cytoplasm. The enzyme catalyses uridine + ATP = UMP + ADP + H(+). It carries out the reaction cytidine + ATP = CMP + ADP + H(+). It participates in pyrimidine metabolism; CTP biosynthesis via salvage pathway; CTP from cytidine: step 1/3. Its pathway is pyrimidine metabolism; UMP biosynthesis via salvage pathway; UMP from uridine: step 1/1. This chain is Uridine kinase, found in Salmonella newport (strain SL254).